A 991-amino-acid polypeptide reads, in one-letter code: Mediator of RNA polymerase II transcription subunit 5 (991 aa).

Belongs to the Mediator complex subunit 5 family. Component of the Mediator complex.

It is found in the nucleus. Functionally, component of the Mediator complex, a coactivator involved in the regulated transcription of nearly all RNA polymerase II-dependent genes. Mediator functions as a bridge to convey information from gene-specific regulatory proteins to the basal RNA polymerase II transcription machinery. Mediator is recruited to promoters by direct interactions with regulatory proteins and serves as a scaffold for the assembly of a functional preinitiation complex with RNA polymerase II and the general transcription factors. This chain is Mediator of RNA polymerase II transcription subunit 5 (NUT1), found in Yarrowia lipolytica (strain CLIB 122 / E 150) (Yeast).